We begin with the raw amino-acid sequence, 429 residues long: UDP-N-acetylglucosamine 1-carboxyvinyltransferase (429 aa).

22–23 lines the phosphoenolpyruvate pocket; that stretch reads KN. Arginine 96 is a binding site for UDP-N-acetyl-alpha-D-glucosamine. Cysteine 120 functions as the Proton donor in the catalytic mechanism. A 2-(S-cysteinyl)pyruvic acid O-phosphothioketal modification is found at cysteine 120. Residues 125–129, aspartate 310, and isoleucine 332 contribute to the UDP-N-acetyl-alpha-D-glucosamine site; that span reads RPVDL.

This sequence belongs to the EPSP synthase family. MurA subfamily.

The protein localises to the cytoplasm. The enzyme catalyses phosphoenolpyruvate + UDP-N-acetyl-alpha-D-glucosamine = UDP-N-acetyl-3-O-(1-carboxyvinyl)-alpha-D-glucosamine + phosphate. Its pathway is cell wall biogenesis; peptidoglycan biosynthesis. Cell wall formation. Adds enolpyruvyl to UDP-N-acetylglucosamine. This chain is UDP-N-acetylglucosamine 1-carboxyvinyltransferase, found in Caulobacter vibrioides (strain ATCC 19089 / CIP 103742 / CB 15) (Caulobacter crescentus).